Reading from the N-terminus, the 175-residue chain is Ribosome maturation factor RimM (175 aa).

Residues 96-175 (EEDFYWRDLI…LIQVNWEPDF (80 aa)) enclose the PRC barrel domain.

Belongs to the RimM family. As to quaternary structure, binds ribosomal protein uS19.

It is found in the cytoplasm. Functionally, an accessory protein needed during the final step in the assembly of 30S ribosomal subunit, possibly for assembly of the head region. Essential for efficient processing of 16S rRNA. May be needed both before and after RbfA during the maturation of 16S rRNA. It has affinity for free ribosomal 30S subunits but not for 70S ribosomes. The polypeptide is Ribosome maturation factor RimM (Psychromonas ingrahamii (strain DSM 17664 / CCUG 51855 / 37)).